Here is a 519-residue protein sequence, read N- to C-terminus: ATP synthase subunit alpha (519 aa).

ATP is bound at residue 174 to 181 (GDRQTGKT).

It belongs to the ATPase alpha/beta chains family. As to quaternary structure, F-type ATPases have 2 components, CF(1) - the catalytic core - and CF(0) - the membrane proton channel. CF(1) has five subunits: alpha(3), beta(3), gamma(1), delta(1), epsilon(1). CF(0) has three main subunits: a(1), b(2) and c(9-12). The alpha and beta chains form an alternating ring which encloses part of the gamma chain. CF(1) is attached to CF(0) by a central stalk formed by the gamma and epsilon chains, while a peripheral stalk is formed by the delta and b chains.

It is found in the cell inner membrane. The catalysed reaction is ATP + H2O + 4 H(+)(in) = ADP + phosphate + 5 H(+)(out). Produces ATP from ADP in the presence of a proton gradient across the membrane. The alpha chain is a regulatory subunit. In Acidovorax ebreus (strain TPSY) (Diaphorobacter sp. (strain TPSY)), this protein is ATP synthase subunit alpha.